Here is a 341-residue protein sequence, read N- to C-terminus: Large ribosomal subunit protein uL29m (341 aa).

The disordered stretch occupies residues Leu-44–Asp-74. The span at Arg-48–Val-62 shows a compositional bias: basic residues.

The protein belongs to the universal ribosomal protein uL29 family. In terms of assembly, component of the mitochondrial large ribosomal subunit. Mature mitochondrial ribosomes consist of a small (37S) and a large (54S) subunit. The 37S subunit contains at least 33 different proteins and 1 molecule of RNA (15S). The 54S subunit contains at least 45 different proteins and 1 molecule of RNA (21S).

Its subcellular location is the mitochondrion. The protein is Large ribosomal subunit protein uL29m (MRPL4) of Eremothecium gossypii (strain ATCC 10895 / CBS 109.51 / FGSC 9923 / NRRL Y-1056) (Yeast).